A 617-amino-acid polypeptide reads, in one-letter code: ATP-dependent zinc metalloprotease FtsH (617 aa).

Topologically, residues 1-7 (MKIPFDR) are cytoplasmic. Residues 8–28 (WLGWPTLLLLLLGLWLLGSSL) traverse the membrane as a helical segment. At 29–102 (RDQRTVEAVP…VSYRRVRESN (74 aa)) the chain is on the periplasmic side. The chain crosses the membrane as a helical span at residues 103–123 (WLSQLLSWMAGPLLLLGFWYF). Over 124–617 (MSRRIDGQQG…GRPAAIRQVA (494 aa)) the chain is Cytoplasmic. 198 to 205 (GPTGTGKT) is an ATP binding site. A Zn(2+)-binding site is contributed by His-421. Residue Glu-422 is part of the active site. The Zn(2+) site is built by His-425 and Asp-498.

This sequence in the central section; belongs to the AAA ATPase family. The protein in the C-terminal section; belongs to the peptidase M41 family. As to quaternary structure, homohexamer. It depends on Zn(2+) as a cofactor.

It localises to the cell inner membrane. Its function is as follows. Acts as a processive, ATP-dependent zinc metallopeptidase for both cytoplasmic and membrane proteins. Plays a role in the quality control of integral membrane proteins. The polypeptide is ATP-dependent zinc metalloprotease FtsH (Methylibium petroleiphilum (strain ATCC BAA-1232 / LMG 22953 / PM1)).